We begin with the raw amino-acid sequence, 264 residues long: MPVVSLAQMMESGVHFGHQTRRWNPKMSPYIYTSRNGVHIIDLVQTAQLMDNAYNYMRSHAEQGKKFLFVGTKRQAAGIIAQEASRCGSHYINQRWLGGMLTNWATIKTRVDRLKDLERREETGALDLLPKKEASMLRREMTKLQKYLGGIKTMRKVPDIVVIVDQRREYNAVQECQKLNIPIVSMLDTNCDPDVVDIPIPANDDAIRSIKLIVGKLADAIYEGRHGQLDAEDDYEDYDGSEYDDDYEETEYTDAVIPDEETEE.

A disordered region spans residues Gln-228–Glu-264. Over residues Asp-230 to Glu-264 the composition is skewed to acidic residues.

It belongs to the universal ribosomal protein uS2 family.

In Nostoc punctiforme (strain ATCC 29133 / PCC 73102), this protein is Small ribosomal subunit protein uS2.